We begin with the raw amino-acid sequence, 470 residues long: tRNA modification GTPase MnmE (470 aa).

The (6S)-5-formyl-5,6,7,8-tetrahydrofolate site is built by lysine 27, glutamate 90, and arginine 129. The 161-residue stretch at 231-391 (GVSLVLAGKP…LRDFLNQRFL (161 aa)) folds into the TrmE-type G domain. GTP-binding positions include 241–246 (NVGKSS), 260–266 (TPFPGTT), and 285–288 (DTAG). The Mg(2+) site is built by serine 245 and threonine 266. (6S)-5-formyl-5,6,7,8-tetrahydrofolate is bound at residue lysine 470.

The protein belongs to the TRAFAC class TrmE-Era-EngA-EngB-Septin-like GTPase superfamily. TrmE GTPase family. As to quaternary structure, homodimer. Heterotetramer of two MnmE and two MnmG subunits. K(+) is required as a cofactor.

It localises to the cytoplasm. Its function is as follows. Exhibits a very high intrinsic GTPase hydrolysis rate. Involved in the addition of a carboxymethylaminomethyl (cmnm) group at the wobble position (U34) of certain tRNAs, forming tRNA-cmnm(5)s(2)U34. The chain is tRNA modification GTPase MnmE from Syntrophobacter fumaroxidans (strain DSM 10017 / MPOB).